The chain runs to 136 residues: Calcitonin (136 aa).

The signal sequence occupies residues 1-25 (MGFLKFSPFLVVSILLLYQACGLQA). A propeptide spanning residues 26 to 82 (VPLRSTLESSPGMATLSEEEARLLAALVQNYMQMKVRELEQEEEQEAEGSSLDSPRS) is cleaved from the precursor. S42 bears the Phosphoserine mark. The segment at 64–84 (LEQEEEQEAEGSSLDSPRSKR) is disordered. A disulfide bridge connects residues C85 and C91. N-linked (GlcNAc...) asparagine glycosylation occurs at N87. The tract at residues 114–136 (GAPGKKRDMAKDLETNHHPYFGN) is disordered. P116 is modified (proline amide). Positions 118 to 130 (KKRDMAKDLETNH) are enriched in basic and acidic residues. Residues 121 to 136 (DMAKDLETNHHPYFGN) constitute a propeptide that is removed on maturation.

The protein belongs to the calcitonin family.

The protein localises to the secreted. In terms of biological role, calcitonin is a peptide hormone that causes a rapid but short-lived drop in the level of calcium and phosphate in blood by promoting the incorporation of those ions in the bones. Calcitonin function is mediated by the calcitonin receptor/CALCR and the CALCR-RAMP2 (AMYR2) receptor complex. The polypeptide is Calcitonin (Rattus norvegicus (Rat)).